Here is a 72-residue protein sequence, read N- to C-terminus: DNA-directed RNA polymerase subunit omega (72 aa).

This sequence belongs to the RNA polymerase subunit omega family. As to quaternary structure, the RNAP catalytic core consists of 2 alpha, 1 beta, 1 beta' and 1 omega subunit. When a sigma factor is associated with the core the holoenzyme is formed, which can initiate transcription.

It carries out the reaction RNA(n) + a ribonucleoside 5'-triphosphate = RNA(n+1) + diphosphate. Promotes RNA polymerase assembly. Latches the N- and C-terminal regions of the beta' subunit thereby facilitating its interaction with the beta and alpha subunits. This chain is DNA-directed RNA polymerase subunit omega, found in Clostridium beijerinckii (strain ATCC 51743 / NCIMB 8052) (Clostridium acetobutylicum).